A 314-amino-acid chain; its full sequence is Methionyl-tRNA formyltransferase (314 aa).

Position 111 to 114 (111 to 114) interacts with (6S)-5,6,7,8-tetrahydrofolate; it reads SLLP.

The protein belongs to the Fmt family.

It catalyses the reaction L-methionyl-tRNA(fMet) + (6R)-10-formyltetrahydrofolate = N-formyl-L-methionyl-tRNA(fMet) + (6S)-5,6,7,8-tetrahydrofolate + H(+). In terms of biological role, attaches a formyl group to the free amino group of methionyl-tRNA(fMet). The formyl group appears to play a dual role in the initiator identity of N-formylmethionyl-tRNA by promoting its recognition by IF2 and preventing the misappropriation of this tRNA by the elongation apparatus. In Coxiella burnetii (strain CbuG_Q212) (Coxiella burnetii (strain Q212)), this protein is Methionyl-tRNA formyltransferase.